Reading from the N-terminus, the 280-residue chain is NAD(P)H-quinone oxidoreductase subunit K, chloroplastic (280 aa).

[4Fe-4S] cluster contacts are provided by C65, C66, C130, and C161. The interval 257-280 is disordered; that stretch reads LLKDWKQSNQKQEQNVKMMKEEEA.

The protein belongs to the complex I 20 kDa subunit family. In terms of assembly, NDH is composed of at least 16 different subunits, 5 of which are encoded in the nucleus. It depends on [4Fe-4S] cluster as a cofactor.

The protein localises to the plastid. It is found in the chloroplast thylakoid membrane. It catalyses the reaction a plastoquinone + NADH + (n+1) H(+)(in) = a plastoquinol + NAD(+) + n H(+)(out). The enzyme catalyses a plastoquinone + NADPH + (n+1) H(+)(in) = a plastoquinol + NADP(+) + n H(+)(out). In terms of biological role, NDH shuttles electrons from NAD(P)H:plastoquinone, via FMN and iron-sulfur (Fe-S) centers, to quinones in the photosynthetic chain and possibly in a chloroplast respiratory chain. The immediate electron acceptor for the enzyme in this species is believed to be plastoquinone. Couples the redox reaction to proton translocation, and thus conserves the redox energy in a proton gradient. The sequence is that of NAD(P)H-quinone oxidoreductase subunit K, chloroplastic from Staurastrum punctulatum (Green alga).